We begin with the raw amino-acid sequence, 367 residues long: Dual-specificity RNA methyltransferase RlmN (367 aa).

The active-site Proton acceptor is the glutamate 93. In terms of domain architecture, Radical SAM core spans 99-333; it reads EEDRATLCVS…VIVRKTRGDD (235 aa). A disulfide bond links cysteine 106 and cysteine 338. [4Fe-4S] cluster is bound by residues cysteine 113, cysteine 117, and cysteine 120. Residues 162–163, serine 194, 216–218, and asparagine 295 contribute to the S-adenosyl-L-methionine site; these read GE and SLH. Cysteine 338 serves as the catalytic S-methylcysteine intermediate.

Belongs to the radical SAM superfamily. RlmN family. [4Fe-4S] cluster is required as a cofactor.

Its subcellular location is the cytoplasm. The enzyme catalyses adenosine(2503) in 23S rRNA + 2 reduced [2Fe-2S]-[ferredoxin] + 2 S-adenosyl-L-methionine = 2-methyladenosine(2503) in 23S rRNA + 5'-deoxyadenosine + L-methionine + 2 oxidized [2Fe-2S]-[ferredoxin] + S-adenosyl-L-homocysteine. The catalysed reaction is adenosine(37) in tRNA + 2 reduced [2Fe-2S]-[ferredoxin] + 2 S-adenosyl-L-methionine = 2-methyladenosine(37) in tRNA + 5'-deoxyadenosine + L-methionine + 2 oxidized [2Fe-2S]-[ferredoxin] + S-adenosyl-L-homocysteine. Specifically methylates position 2 of adenine 2503 in 23S rRNA and position 2 of adenine 37 in tRNAs. m2A2503 modification seems to play a crucial role in the proofreading step occurring at the peptidyl transferase center and thus would serve to optimize ribosomal fidelity. In Aeromonas hydrophila subsp. hydrophila (strain ATCC 7966 / DSM 30187 / BCRC 13018 / CCUG 14551 / JCM 1027 / KCTC 2358 / NCIMB 9240 / NCTC 8049), this protein is Dual-specificity RNA methyltransferase RlmN.